The following is a 339-amino-acid chain: DNA-directed RNA polymerase subunit alpha (339 aa).

Positions 1 to 233 (MVREEVAGST…DLFLPFLHAE (233 aa)) are alpha N-terminal domain (alpha-NTD). The alpha C-terminal domain (alpha-CTD) stretch occupies residues 264-339 (KKGIPLNCIF…IDLLKNKLSF (76 aa)).

Belongs to the RNA polymerase alpha chain family. As to quaternary structure, in plastids the minimal PEP RNA polymerase catalytic core is composed of four subunits: alpha, beta, beta', and beta''. When a (nuclear-encoded) sigma factor is associated with the core the holoenzyme is formed, which can initiate transcription.

The protein resides in the plastid. It is found in the chloroplast. The enzyme catalyses RNA(n) + a ribonucleoside 5'-triphosphate = RNA(n+1) + diphosphate. In terms of biological role, DNA-dependent RNA polymerase catalyzes the transcription of DNA into RNA using the four ribonucleoside triphosphates as substrates. The protein is DNA-directed RNA polymerase subunit alpha of Heteranthelium piliferum (Elymus pilifer).